The chain runs to 248 residues: Pyridoxal 4-dehydrogenase (248 aa).

11–35 (LVTGAAQGIGKAIAARLAADGATVI) lines the NAD(+) pocket. S141 is a substrate binding site. Residue Y154 is the Proton acceptor of the active site.

Belongs to the short-chain dehydrogenases/reductases (SDR) family. As to quaternary structure, homotetramer.

It carries out the reaction pyridoxal + NAD(+) = 4-pyridoxolactone + NADH + H(+). Its pathway is cofactor degradation; B6 vitamer degradation; 4-pyridoxate from pyridoxal: step 1/2. In terms of biological role, involved in the degradation of pyridoxine or pyridoxamine (free, phosphate-unbound, forms of vitamin B6). Oxidizes pyridoxal to 4-pyridoxolactone, but does not have activity toward pyridoxal 5'-phosphate, pyridoxine, pyridoxamine, pyridoxamine 5'-phosphate, 4-phthalaldehyde, 2-nitrobenzaldehyde, pyridine, formaldehyde, 2-carboxybenzaldehyde or sugars. The protein is Pyridoxal 4-dehydrogenase of Mesorhizobium japonicum (strain LMG 29417 / CECT 9101 / MAFF 303099) (Mesorhizobium loti (strain MAFF 303099)).